The sequence spans 475 residues: Aspartyl/glutamyl-tRNA(Asn/Gln) amidotransferase subunit B (475 aa).

It belongs to the GatB/GatE family. GatB subfamily. Heterotrimer of A, B and C subunits.

The enzyme catalyses L-glutamyl-tRNA(Gln) + L-glutamine + ATP + H2O = L-glutaminyl-tRNA(Gln) + L-glutamate + ADP + phosphate + H(+). It catalyses the reaction L-aspartyl-tRNA(Asn) + L-glutamine + ATP + H2O = L-asparaginyl-tRNA(Asn) + L-glutamate + ADP + phosphate + 2 H(+). Functionally, allows the formation of correctly charged Asn-tRNA(Asn) or Gln-tRNA(Gln) through the transamidation of misacylated Asp-tRNA(Asn) or Glu-tRNA(Gln) in organisms which lack either or both of asparaginyl-tRNA or glutaminyl-tRNA synthetases. The reaction takes place in the presence of glutamine and ATP through an activated phospho-Asp-tRNA(Asn) or phospho-Glu-tRNA(Gln). The chain is Aspartyl/glutamyl-tRNA(Asn/Gln) amidotransferase subunit B from Chlorobium luteolum (strain DSM 273 / BCRC 81028 / 2530) (Pelodictyon luteolum).